Reading from the N-terminus, the 301-residue chain is MSNTVEFARMNGLGNKILVVDMRGRKDVVTAAAAIALNADPATEFDQIMAIHDPKAEGTDAWIDILNSDGTKAQACGNGTRCVVQALAAETGKKVFTFQTVAGILNAVEHEDGTISVDMGRPVFDWDKIPLAEEFADTRRIELQIGPIDNPVLHSPSVMSMGNPHAIFWVDKDPMSYDLARFGPLLENHPMFPERANITLAQVLSPTLLRTRTWERGAGLTLACGSAACSAAVSAARTGRTGRKVTIDVASAPASGQLTIEWRENDDHVVMTGPAEWEWSGVVDPVTGSFTRAQEQGAQAR.

Residues Asn-15, Gln-47, and Asn-67 each coordinate substrate. Residue Cys-76 is the Proton donor of the active site. Substrate is bound by residues 77-78 (GN), Asn-163, Asn-197, and 215-216 (ER). The active-site Proton acceptor is the Cys-224. Residue 225-226 (GS) participates in substrate binding.

Belongs to the diaminopimelate epimerase family. In terms of assembly, homodimer.

The protein resides in the cytoplasm. It catalyses the reaction (2S,6S)-2,6-diaminopimelate = meso-2,6-diaminopimelate. The protein operates within amino-acid biosynthesis; L-lysine biosynthesis via DAP pathway; DL-2,6-diaminopimelate from LL-2,6-diaminopimelate: step 1/1. Functionally, catalyzes the stereoinversion of LL-2,6-diaminopimelate (L,L-DAP) to meso-diaminopimelate (meso-DAP), a precursor of L-lysine and an essential component of the bacterial peptidoglycan. This chain is Diaminopimelate epimerase, found in Rhizobium rhizogenes (strain K84 / ATCC BAA-868) (Agrobacterium radiobacter).